The primary structure comprises 487 residues: Cysteine--tRNA ligase (487 aa).

Residue Cys-30 coordinates Zn(2+). Residues 32 to 42 carry the 'HIGH' region motif; sequence PTVYGHAHLGH. 3 residues coordinate Zn(2+): Cys-226, His-251, and Glu-255. Positions 283 to 287 match the 'KMSKS' region motif; it reads KMGKS. ATP is bound at residue Lys-286.

Belongs to the class-I aminoacyl-tRNA synthetase family. As to quaternary structure, monomer. Zn(2+) serves as cofactor.

Its subcellular location is the cytoplasm. The enzyme catalyses tRNA(Cys) + L-cysteine + ATP = L-cysteinyl-tRNA(Cys) + AMP + diphosphate. The protein is Cysteine--tRNA ligase (cysS) of Chlorobaculum tepidum (strain ATCC 49652 / DSM 12025 / NBRC 103806 / TLS) (Chlorobium tepidum).